The sequence spans 184 residues: MGSLLMERNFMVEDTFTNGKLSKKEKILFLIKFYIIFLVVFFILSYFGKYLIGIVTYLSYIFTKIIISDARLADNFIYLPNNTVEVVEECTGSFLIAGLLALIIVYSKNIKEFIIGIFFVLLAFFVNIFRIVLICYLVNMHPESSYLYHEIAGYGVILTLVPVLVIGYLKIIEKYRHSSNKSHL.

4 helical membrane passes run 27–47 (ILFL…LSYF), 86–106 (VVEE…IIVY), 114–134 (IIGI…IVLI), and 151–171 (IAGY…YLKI). Catalysis depends on C90, which acts as the Acyl-thioester intermediate. R130 (proton donor) is an active-site residue.

This sequence belongs to the exosortase/archaeosortase family. Archaeosortase E subfamily.

The protein resides in the cell membrane. Its function is as follows. Transpeptidase that recognizes and modifies its substrate by proteolytic cleavage of a sorting signal. Following cleavage, a covalent intermediate is formed via a thioester bond between the archaeosortase and its substrate, which is then transferred and covalently attached to the cell membrane. The chain is Probable archaeosortase E from Methanocaldococcus jannaschii (strain ATCC 43067 / DSM 2661 / JAL-1 / JCM 10045 / NBRC 100440) (Methanococcus jannaschii).